A 59-amino-acid polypeptide reads, in one-letter code: UPF0181 protein YoaH (59 aa).

This sequence belongs to the UPF0181 family.

This chain is UPF0181 protein YoaH, found in Shigella flexneri serotype 5b (strain 8401).